The following is a 327-amino-acid chain: Prenyl transferase janC (327 aa).

Residues 3-23 (FPGAGPILGAIAVSSCLYFLF) traverse the membrane as a helical segment. Positions 63 and 96 each coordinate isopentenyl diphosphate. Aspartate 103 and aspartate 107 together coordinate Mg(2+). Dimethylallyl diphosphate contacts are provided by arginine 112 and lysine 196. Residue asparagine 211 is glycosylated (N-linked (GlcNAc...) asparagine).

The protein belongs to the FPP/GGPP synthase family.

It localises to the membrane. It participates in secondary metabolite biosynthesis. In terms of biological role, prenyl transferase; part of the gene cluster that mediates the biosynthesis of the indole diterpenes janthitremanes such as shearinine K or shearinine A. The geranylgeranyl diphosphate (GGPP) synthase janG catalyzes the first step in janthitremane biosynthesis via conversion of farnesyl pyrophosphate and isopentyl pyrophosphate into geranylgeranyl pyrophosphate (GGPP). Condensation of indole-3-glycerol phosphate with GGPP by the prenyl transferase janC then forms 3-geranylgeranylindole (3-GGI). Epoxidation by the FAD-dependent monooxygenase janM leads to a epoxidized-GGI that is substrate of the terpene cyclase janB for cyclization to yield paspaline. Paspaline is subsequently converted to 13-desoxypaspaline by the cytochrome P450 monooxygenase janP, via beta-PC-M6 in a series of alpha-face oxidations. The cytochrome P450 monooxygenase janQ is proposed to carry out sequential beta-face oxidation steps at C-7 and C-13 of 13-desoxypaspaline to form paspalicine and paspalinine respectively. The indole diterpene prenyltransferase janD may then convert paspalinine into shearinine K which is substrate of janO and/or additional enzymes for oxidation and cyclization to generate shearinine A. In Penicillium janthinellum (Penicillium vitale), this protein is Prenyl transferase janC.